The primary structure comprises 93 residues: MLQLNIIRRIKMTKSITTSIRLEINLSKKLEKATYDLHREKSWIISEAYLKQLENSDLAKEAKRQSLLASKENNPDANLWLKHNEESWLDEWK.

This is an uncharacterized protein from Rickettsia conorii (strain ATCC VR-613 / Malish 7).